Reading from the N-terminus, the 227-residue chain is DNA repair protein RecO (227 aa).

Belongs to the RecO family.

Functionally, involved in DNA repair and RecF pathway recombination. In Pseudomonas putida (strain GB-1), this protein is DNA repair protein RecO.